Consider the following 489-residue polypeptide: N-succinylglutamate 5-semialdehyde dehydrogenase (489 aa).

216 to 221 contributes to the NAD(+) binding site; it reads GSAATG. Catalysis depends on residues E239 and C273.

It belongs to the aldehyde dehydrogenase family. AstD subfamily.

The catalysed reaction is N-succinyl-L-glutamate 5-semialdehyde + NAD(+) + H2O = N-succinyl-L-glutamate + NADH + 2 H(+). It participates in amino-acid degradation; L-arginine degradation via AST pathway; L-glutamate and succinate from L-arginine: step 4/5. Catalyzes the NAD-dependent reduction of succinylglutamate semialdehyde into succinylglutamate. This is N-succinylglutamate 5-semialdehyde dehydrogenase from Erwinia tasmaniensis (strain DSM 17950 / CFBP 7177 / CIP 109463 / NCPPB 4357 / Et1/99).